We begin with the raw amino-acid sequence, 1095 residues long: DNA polymerase delta catalytic subunit (1095 aa).

Residues Met-1–Pro-11 show a composition bias toward basic residues. The segment at Met-1–Thr-37 is disordered. Residues Cys-1007, Cys-1010, Cys-1020, and Cys-1023 each coordinate Zn(2+). The CysA-type zinc finger occupies Cys-1007–Cys-1023. [4Fe-4S] cluster-binding residues include Cys-1052, Cys-1055, Cys-1065, and Cys-1070. The CysB motif signature appears at Cys-1052–Cys-1070.

This sequence belongs to the DNA polymerase type-B family. In terms of assembly, heterodimer with subunits of 125 kDa and 50 kDa. The 125 kDa subunit contains the polymerase active site and most likely the active site for the 3'-5' exonuclease activity. [4Fe-4S] cluster serves as cofactor.

Its subcellular location is the nucleus. It catalyses the reaction DNA(n) + a 2'-deoxyribonucleoside 5'-triphosphate = DNA(n+1) + diphosphate. Functionally, this polymerase possesses two enzymatic activities: DNA synthesis (polymerase) and an exonucleolytic activity that degrades single-stranded DNA in the 3'- to 5'-direction. The protein is DNA polymerase delta catalytic subunit (POLD1) of Arabidopsis thaliana (Mouse-ear cress).